The primary structure comprises 91 residues: PqqA binding protein (91 aa).

This sequence belongs to the PqqD family. In terms of assembly, monomer. Interacts with PqqE.

Its pathway is cofactor biosynthesis; pyrroloquinoline quinone biosynthesis. Its function is as follows. Functions as a PqqA binding protein and presents PqqA to PqqE, in the pyrroloquinoline quinone (PQQ) biosynthetic pathway. This chain is PqqA binding protein, found in Pseudomonas putida (strain W619).